The following is a 202-amino-acid chain: Na(+)-translocating NADH-quinone reductase subunit E (202 aa).

6 helical membrane passes run 5-25 (VSLFITSVFIENMALAYFLGM), 35-55 (VSTAIGLGVAVVVVMAITVPL), 81-101 (FLGLLSYIGLIAATVQILEMF), 114-134 (GVFLPLITVNCAILGGVLFMV), 144-164 (VVYGVGAGFGWALAITALAGI), and 180-200 (LGITFITVGLMSLGFMSFGGM).

The protein belongs to the NqrDE/RnfAE family. As to quaternary structure, composed of six subunits; NqrA, NqrB, NqrC, NqrD, NqrE and NqrF.

The protein localises to the cell inner membrane. It catalyses the reaction a ubiquinone + n Na(+)(in) + NADH + H(+) = a ubiquinol + n Na(+)(out) + NAD(+). In terms of biological role, NQR complex catalyzes the reduction of ubiquinone-1 to ubiquinol by two successive reactions, coupled with the transport of Na(+) ions from the cytoplasm to the periplasm. NqrA to NqrE are probably involved in the second step, the conversion of ubisemiquinone to ubiquinol. In Psychrobacter arcticus (strain DSM 17307 / VKM B-2377 / 273-4), this protein is Na(+)-translocating NADH-quinone reductase subunit E.